The primary structure comprises 270 residues: Malonyl-[acyl-carrier protein] O-methyltransferase (270 aa).

The protein belongs to the methyltransferase superfamily.

It carries out the reaction malonyl-[ACP] + S-adenosyl-L-methionine = malonyl-[ACP] methyl ester + S-adenosyl-L-homocysteine. It participates in cofactor biosynthesis; biotin biosynthesis. Functionally, converts the free carboxyl group of a malonyl-thioester to its methyl ester by transfer of a methyl group from S-adenosyl-L-methionine (SAM). It allows to synthesize pimeloyl-ACP via the fatty acid synthetic pathway. The chain is Malonyl-[acyl-carrier protein] O-methyltransferase from Marinomonas sp. (strain MWYL1).